The sequence spans 691 residues: DNA ligase (691 aa).

NAD(+) is bound by residues 56-60 (DRAYD), 104-105 (SI), and Glu-139. Lys-141 functions as the N6-AMP-lysine intermediate in the catalytic mechanism. NAD(+) is bound by residues Arg-162, Glu-198, Lys-314, and Lys-338. Zn(2+) is bound by residues Cys-429, Cys-432, Cys-445, and Cys-451. In terms of domain architecture, BRCT spans 607–691 (TAGDALSGQT…SLLESHGIEI (85 aa)).

It belongs to the NAD-dependent DNA ligase family. LigA subfamily. It depends on Mg(2+) as a cofactor. Requires Mn(2+) as cofactor.

It catalyses the reaction NAD(+) + (deoxyribonucleotide)n-3'-hydroxyl + 5'-phospho-(deoxyribonucleotide)m = (deoxyribonucleotide)n+m + AMP + beta-nicotinamide D-nucleotide.. Its function is as follows. DNA ligase that catalyzes the formation of phosphodiester linkages between 5'-phosphoryl and 3'-hydroxyl groups in double-stranded DNA using NAD as a coenzyme and as the energy source for the reaction. It is essential for DNA replication and repair of damaged DNA. This is DNA ligase from Natronomonas pharaonis (strain ATCC 35678 / DSM 2160 / CIP 103997 / JCM 8858 / NBRC 14720 / NCIMB 2260 / Gabara) (Halobacterium pharaonis).